Here is a 232-residue protein sequence, read N- to C-terminus: Endonuclease V (232 aa).

2 residues coordinate Mg(2+): D43 and D109.

It belongs to the endonuclease V family. The cofactor is Mg(2+).

The protein localises to the cytoplasm. It carries out the reaction Endonucleolytic cleavage at apurinic or apyrimidinic sites to products with a 5'-phosphate.. In terms of biological role, DNA repair enzyme involved in the repair of deaminated bases. Selectively cleaves double-stranded DNA at the second phosphodiester bond 3' to a deoxyinosine leaving behind the intact lesion on the nicked DNA. The chain is Endonuclease V from Thermofilum pendens (strain DSM 2475 / Hrk 5).